Consider the following 371-residue polypeptide: MAAPARRLCHIAFHVPAGQPLARDLQRIFGFQPLAVREAGGWRQLALRSGDAVFLVNEGTGPREPLYGLDPHHSVPSATNLCFDVEDVDRAARALAARGCIMPVPPTRVRDAQGTATYTVVSSPAGNLSLTLLQRAGYRGSFLPGFRPLPCTPGPGWVSHVDHLTLACTSGSSPTLMRWFHNCLGFHHLPLSPGEDPELGLKVAVGSGRGGLRLTALQTLPNSTVPTLVLAESLPGLTSEQDQVEQFLTRHGGPGLQHVGLYTPNIIDASEGMAKAGGRLLTPPEAYYQQPGKEEQILASGHKPSFLERQGILLDGDKDEFLLQVFTKSLFDEDTFFLELIERQGATGFGQNNIRALWQSVQEEAARAQGT.

2 consecutive VOC domains span residues arginine 7–arginine 135 and histidine 160–lysine 328. Fe cation contacts are provided by histidine 163, histidine 258, and glutamate 339.

It belongs to the 4HPPD family. Fe cation serves as cofactor.

The protein localises to the mitochondrion. The catalysed reaction is 3-(4-hydroxyphenyl)pyruvate + O2 = (S)-4-hydroxymandelate + CO2. In terms of biological role, iron-dependent dioxygenase that catalyzes the conversion of 4-hydroxyphenylpyruvate (4-HPPA) to 4-hydroxymandelate (4-HMA) in the mitochondria, one of the steps in the biosynthesis of coenzyme Q10 from tyrosine. This chain is 4-hydroxyphenylpyruvate dioxygenase-like protein, found in Rattus norvegicus (Rat).